The sequence spans 63 residues: Prokaryotic ubiquitin-like protein UBact (63 aa).

Positions 1-63 (MSGRSTFGRF…SRRYRQRTGE (63 aa)) are disordered. Residues 17–50 (PWERKPGDDEGGPKRPKVERPDTNDLLKRMRRVD) show a composition bias toward basic and acidic residues. Glu-63 participates in a covalent cross-link: Isoglutamyl lysine isopeptide (Glu-Lys) (interchain with K-? in acceptor proteins).

The protein belongs to the ubiquitin-like protein UBact family.

Its function is as follows. May function as a protein modifier covalently attached to lysine residues of substrate proteins. This may serve to target the modified proteins for degradation by proteasomes. This Handelsmanbacteria sp. (strain RIFCSPLOWO2_12_FULL_64_10) protein is Prokaryotic ubiquitin-like protein UBact.